A 426-amino-acid polypeptide reads, in one-letter code: Metacaspase-1B (426 aa).

The span at 1–14 (MSGYPGAGYNGGGY) shows a compositional bias: gly residues. Positions 1–111 (MSGYPGAGYN…QAPPPPPQAP (111 aa)) are disordered. Residues 21–68 (QYGGYYPPQPAYNAYQQPPPQQQQYMVYHQPSPGPQQHQHWNPQQQTP) are compositionally biased toward low complexity. Residues H217 and C273 contribute to the active site.

This sequence belongs to the peptidase C14B family.

Its function is as follows. Involved in cell death (apoptosis). This is Metacaspase-1B (casB) from Neurospora crassa (strain ATCC 24698 / 74-OR23-1A / CBS 708.71 / DSM 1257 / FGSC 987).